The chain runs to 382 residues: D-galactonate dehydratase (382 aa).

Asp-183 contacts Mg(2+). The Proton donor role is filled by His-185. Residues Glu-209 and Glu-235 each contribute to the Mg(2+) site. The active-site Proton acceptor is the His-285.

This sequence belongs to the mandelate racemase/muconate lactonizing enzyme family. GalD subfamily. Mg(2+) is required as a cofactor.

The catalysed reaction is D-galactonate = 2-dehydro-3-deoxy-D-galactonate + H2O. The protein operates within carbohydrate acid metabolism; D-galactonate degradation; D-glyceraldehyde 3-phosphate and pyruvate from D-galactonate: step 1/3. Its function is as follows. Catalyzes the dehydration of D-galactonate to 2-keto-3-deoxy-D-galactonate. In Ralstonia pickettii (strain 12J), this protein is D-galactonate dehydratase.